A 253-amino-acid chain; its full sequence is GTP cyclohydrolase III 2 (253 aa).

A disordered region spans residues 102–125 (LRDAGSAQDENRQEALSHRSPPGF).

Belongs to the archaeal-type GTP cyclohydrolase family.

It carries out the reaction GTP + 3 H2O = 2-amino-5-formylamino-6-(5-phospho-D-ribosylamino)pyrimidin-4(3H)-one + 2 phosphate + 2 H(+). Catalyzes the formation of 2-amino-5-formylamino-6-ribofuranosylamino-4(3H)-pyrimidinone ribonucleotide monophosphate and inorganic phosphate from GTP. Also has an independent pyrophosphate phosphohydrolase activity. The chain is GTP cyclohydrolase III 2 (gch32) from Halobacterium salinarum (strain ATCC 700922 / JCM 11081 / NRC-1) (Halobacterium halobium).